Here is a 276-residue protein sequence, read N- to C-terminus: Ribonuclease 3 (276 aa).

One can recognise an RNase III domain in the interval 30–161; that stretch reads LTAFIRSLFK…LTGAIYLDRG (132 aa). A Mg(2+)-binding site is contributed by Glu74. Asp78 is an active-site residue. Asp147 and Glu150 together coordinate Mg(2+). Residue Glu150 is part of the active site. The DRBM domain maps to 188–257; the sequence is NHKSRLIEHT…AEEAMGALER (70 aa).

It belongs to the ribonuclease III family. In terms of assembly, homodimer. It depends on Mg(2+) as a cofactor.

The protein resides in the cytoplasm. The enzyme catalyses Endonucleolytic cleavage to 5'-phosphomonoester.. Functionally, digests double-stranded RNA. Involved in the processing of primary rRNA transcript to yield the immediate precursors to the large and small rRNAs (23S and 16S). Processes some mRNAs, and tRNAs when they are encoded in the rRNA operon. Processes pre-crRNA and tracrRNA of type II CRISPR loci if present in the organism. The polypeptide is Ribonuclease 3 (Chlorobium luteolum (strain DSM 273 / BCRC 81028 / 2530) (Pelodictyon luteolum)).